A 473-amino-acid chain; its full sequence is Cell division protein FtsZ homolog 2-2, chloroplastic (473 aa).

Residues 124–128 (GGGSN), 213–215 (GTG), Glu-244, and Arg-248 contribute to the GTP site. Thr-282 carries the phosphothreonine; by PGK1 modification. GTP is bound at residue Asp-292. Residues 424–455 (EEGEGRPLQATQADASMGATRRPSSSFTEGSS) are disordered. Over residues 445–454 (RPSSSFTEGS) the composition is skewed to polar residues.

The protein belongs to the FtsZ family. Aggregates to form a contractile ring-like structure; contraction of the ring was accompanied by an increase in the filament turnover rate. Self-interacts and binds to FTSZ1 in heteropolymers to form two morphologically distinct types of filaments, termed type-I (smooth filaments) and -II (rough filaments), in a GTP-dependent manner. Part of a complex made of ARC3, ARC6, FTSZ1 and FTSZ2. Interacts (via C-terminus) with ARC6. Interacts with CDP1/PARC6. Binds to PGK1. In terms of processing, phosphorylation at Thr-282 is required for the formation of contractile ring at the chloroplast midpoint.

The protein resides in the plastid. The protein localises to the chloroplast stroma. Its subcellular location is the chloroplast thylakoid membrane. In terms of biological role, exhibits GTPase activity. Component of the plastid division machinery that forms a contractile ring at the division site. Contributes to plastid division in the vegetative shoot apex, at the shoot apical meristem (SAM) where the proplastid-to-chloroplast transition takes place. The protein is Cell division protein FtsZ homolog 2-2, chloroplastic of Arabidopsis thaliana (Mouse-ear cress).